A 397-amino-acid chain; its full sequence is Phosphoglycerate kinase (397 aa).

Residues 21–23, Arg37, 60–63, Arg119, and Arg152 contribute to the substrate site; these read DFN and HLGR. ATP is bound by residues Lys203, Gly294, Glu325, and 354 to 357; that span reads GGDS.

It belongs to the phosphoglycerate kinase family. Monomer.

The protein localises to the cytoplasm. It carries out the reaction (2R)-3-phosphoglycerate + ATP = (2R)-3-phospho-glyceroyl phosphate + ADP. The protein operates within carbohydrate degradation; glycolysis; pyruvate from D-glyceraldehyde 3-phosphate: step 2/5. The chain is Phosphoglycerate kinase from Chlorobium limicola (strain DSM 245 / NBRC 103803 / 6330).